Reading from the N-terminus, the 248-residue chain is Functional amyloid sbunit FapE (248 aa).

The N-terminal stretch at Met-1–Ala-20 is a signal peptide.

The protein belongs to the FapE family. A minor component of purified amyloid fibrils. Fibrils are resistant to boiling in 2% (weight/vol) SDS and require &gt;90% (vol/vol) formic acid to dissolve.

It is found in the fimbrium. Its subcellular location is the secreted. A minor component of the functional amyloid in this bacterium. Upon overexpression of the endogenous six-gene locus (fapA-fapF) in situ, cells form large clumps during liquid growth, make large amounts of biofilm and produce amyloid fibrils. Expression of the 6 gene operon in E.coli strain BL21(DE3) induces flocculation and biofilm formation with copious extracellular fibrils. The protein is Functional amyloid sbunit FapE of Pseudomonas fluorescens.